A 291-amino-acid chain; its full sequence is Geranyl diphosphate 2-C-methyltransferase (291 aa).

It belongs to the geranyl diphosphate 2-C-methyltransferase family. It depends on Mg(2+) as a cofactor.

The catalysed reaction is (2E)-geranyl diphosphate + S-adenosyl-L-methionine = (E)-2-methylgeranyl diphosphate + S-adenosyl-L-homocysteine + H(+). Catalyzes the SAM-dependent methylation of geranyl diphosphate (GPP) to yield (E)-2-methylgeranyl diphosphate (2-MeGPP). The polypeptide is Geranyl diphosphate 2-C-methyltransferase (Streptomyces ambofaciens (strain ATCC 23877 / 3486 / DSM 40053 / JCM 4204 / NBRC 12836 / NRRL B-2516)).